Reading from the N-terminus, the 385-residue chain is tRNA (guanine(26)-N(2))-dimethyltransferase (385 aa).

Residues M1–T379 enclose the Trm1 methyltransferase domain. R37, R67, D82, D108, and A109 together coordinate S-adenosyl-L-methionine. Residues C247, C250, C267, and C270 each coordinate Zn(2+).

This sequence belongs to the class I-like SAM-binding methyltransferase superfamily. Trm1 family.

The enzyme catalyses guanosine(26) in tRNA + 2 S-adenosyl-L-methionine = N(2)-dimethylguanosine(26) in tRNA + 2 S-adenosyl-L-homocysteine + 2 H(+). Its function is as follows. Dimethylates a single guanine residue at position 26 of a number of tRNAs using S-adenosyl-L-methionine as donor of the methyl groups. This chain is tRNA (guanine(26)-N(2))-dimethyltransferase, found in Haloquadratum walsbyi (strain DSM 16790 / HBSQ001).